The following is a 134-amino-acid chain: Small ribosomal subunit protein uS11 (134 aa).

This sequence belongs to the universal ribosomal protein uS11 family. As to quaternary structure, part of the 30S ribosomal subunit. Interacts with proteins S7 and S18. Binds to IF-3.

Located on the platform of the 30S subunit, it bridges several disparate RNA helices of the 16S rRNA. Forms part of the Shine-Dalgarno cleft in the 70S ribosome. The chain is Small ribosomal subunit protein uS11 from Paracidovorax citrulli (strain AAC00-1) (Acidovorax citrulli).